The primary structure comprises 208 residues: Cytidylate kinase (208 aa).

Residue 7–15 participates in ATP binding; the sequence is GPAASGKGT.

It belongs to the cytidylate kinase family. Type 1 subfamily.

The protein resides in the cytoplasm. The catalysed reaction is CMP + ATP = CDP + ADP. It carries out the reaction dCMP + ATP = dCDP + ADP. This is Cytidylate kinase from Xanthobacter autotrophicus (strain ATCC BAA-1158 / Py2).